We begin with the raw amino-acid sequence, 384 residues long: tRNA-dihydrouridine(20) synthase [NAD(P)+] (384 aa).

Residues 12–14 (PMV) and Gln-88 contribute to the FMN site. Residue Cys-117 is the Proton donor of the active site. FMN contacts are provided by residues Lys-160, His-188, 222-224 (NGA), and 249-250 (AE). The interval 359–384 (KQKRKQTDHIGSDTKKQKVVPLPTDI) is disordered. Basic and acidic residues predominate over residues 363-374 (KQTDHIGSDTKK).

The protein belongs to the Dus family. Dus2 subfamily. Monomer. Requires FMN as cofactor. In terms of processing, N-glycosylated.

It is found in the cytoplasm. The protein resides in the nucleus. The catalysed reaction is 5,6-dihydrouridine(20) in tRNA + NADP(+) = uridine(20) in tRNA + NADPH + H(+). It catalyses the reaction 5,6-dihydrouridine(20) in tRNA + NAD(+) = uridine(20) in tRNA + NADH + H(+). The enzyme catalyses a 5,6-dihydrouridine in mRNA + NAD(+) = a uridine in mRNA + NADH + H(+). It carries out the reaction a 5,6-dihydrouridine in mRNA + NADP(+) = a uridine in mRNA + NADPH + H(+). In terms of biological role, catalyzes the NADPH-dependent synthesis of dihydrouridine, a modified base found in the D-loop of most tRNAs. Specifically modifies U20 in cytoplasmic tRNAs. Also able to mediate dihydrouridylation of some mRNAs, thereby affecting their translation. The polypeptide is tRNA-dihydrouridine(20) synthase [NAD(P)+] (SMM1) (Saccharomyces cerevisiae (strain ATCC 204508 / S288c) (Baker's yeast)).